A 188-amino-acid chain; its full sequence is Ion-translocating oxidoreductase complex subunit B (188 aa).

The tract at residues 1 to 26 is hydrophobic; it reads MNGVFLAIGALLPICLAGGALLGYAA. The 59-residue stretch at 32-90 folds into the 4Fe-4S domain; sequence QGDPVAEQVNALLPQTQCGQCGYPGCKPYAEAIAAGDKINKCPPGGEATIRALADLLDL. [4Fe-4S] cluster is bound by residues Cys-49, Cys-52, Cys-57, Cys-73, Cys-113, Cys-116, Cys-119, Cys-123, Cys-143, Cys-146, Cys-149, and Cys-153. 2 4Fe-4S ferredoxin-type domains span residues 104–133 and 134–163; these read RVAY…GAAR and LMHT…MREI.

The protein belongs to the 4Fe4S bacterial-type ferredoxin family. RnfB subfamily. As to quaternary structure, the complex is composed of six subunits: RnfA, RnfB, RnfC, RnfD, RnfE and RnfG. [4Fe-4S] cluster is required as a cofactor.

It localises to the cell inner membrane. Its function is as follows. Part of a membrane-bound complex that couples electron transfer with translocation of ions across the membrane. In Pseudomonas aeruginosa (strain LESB58), this protein is Ion-translocating oxidoreductase complex subunit B.